Consider the following 165-residue polypeptide: Peptide methionine sulfoxide reductase MsrA (165 aa).

The active site involves C11.

The protein belongs to the MsrA Met sulfoxide reductase family.

It carries out the reaction L-methionyl-[protein] + [thioredoxin]-disulfide + H2O = L-methionyl-(S)-S-oxide-[protein] + [thioredoxin]-dithiol. The enzyme catalyses [thioredoxin]-disulfide + L-methionine + H2O = L-methionine (S)-S-oxide + [thioredoxin]-dithiol. In terms of biological role, has an important function as a repair enzyme for proteins that have been inactivated by oxidation. Catalyzes the reversible oxidation-reduction of methionine sulfoxide in proteins to methionine. In Ureaplasma urealyticum serovar 10 (strain ATCC 33699 / Western), this protein is Peptide methionine sulfoxide reductase MsrA.